Here is a 426-residue protein sequence, read N- to C-terminus: Inhibin beta A chain (426 aa).

The first 20 residues, 1-20 (MPLLWLRGFLLASCWIIVKS), serve as a signal peptide directing secretion. A propeptide spanning residues 21–310 (SPTPGSEGHS…EDHPHRRRRR (290 aa)) is cleaved from the precursor. Asparagine 165 carries an N-linked (GlcNAc...) asparagine glycan. Residues 177–186 (QQQKHPQGSS) show a composition bias toward polar residues. 2 disordered regions span residues 177-201 (QQQK…MEER) and 260-291 (KKKK…SHRP). Residues 263–275 (KEEEGEGKKKDGG) are compositionally biased toward basic and acidic residues. Disulfide bonds link cysteine 314-cysteine 322, cysteine 321-cysteine 391, cysteine 350-cysteine 423, and cysteine 354-cysteine 425.

This sequence belongs to the TGF-beta family. In terms of assembly, dimeric, linked by one or more disulfide bonds. Inhibin A is a dimer of alpha/INHA and beta-A/INHBA. Activin A is a homodimer of beta-A/INHBA. Activin AB is a dimer of beta-A/INHBA and beta-B/INHBB. Interacts with FST and FSTL3; these interactions prevent activin A interaction to its type II receptor. Activin A interacts with ACVR2A. Activin A interacts with BMPR2. Inhibin A interacts with ACVR1; this interaction creates a non-signaling complex (NSC) that inhibits ACVR1-mediated BMP signaling. Inhibin A interacts with ACVR2A.

It localises to the secreted. Its function is as follows. Inhibins/activins are involved in regulating a number of diverse functions such as hypothalamic and pituitary hormone secretion, gonadal hormone secretion, germ cell development and maturation, erythroid differentiation, insulin secretion, nerve cell survival, embryonic axial development or bone growth, depending on their subunit composition. In terms of biological role, activin A is a homodimer of INHBA that plays a role in several essential biological processes including embryonic development, stem cell maintenance and differentiation, haematopoiesis, cell proliferation and tissue fibrosis. Signals through type I (such as ACVR1B or ACVR1C) and type II receptors (such as ACVR2A, ACVR2B or BMPR2) which, upon ligand binding, phosphorylate SMAD2 and SMAD3 intracellular signaling mediators that form a complex with SMAD4, translocate to the nucleus and modulate gene expression. Can also activate alternative non-canonical intracellular signaling pathways including the p38 MAPK, extracellular signal-regulated kinases 1/2 (ERK1/2) and c-Jun N-terminal kinases (JNKs) to modulate cell migration and differentiation. Alternatively, promotes osteoblastic differentiation via ACVRL1-SMAD1/5/9 pathway. In addition, can engage the type I receptor ACVR1 to form an ACVR1-activin A-type II receptor non-signaling complex (NSC) that renders receptors unavailable for engagement with BMPs, hence resulting in an apparent inhibition of ACVR1-mediated BMP signaling. Inhibin A is a dimer of alpha/INHA and beta-A/INHBA that functions as a feedback regulator in the hypothalamic-pituitary-gonadal (HPG) axis. Inhibits the secretion of FSH from the anterior pituitary gland by acting on pituitary gonadotrope cells. Antagonizes activin A by binding to the proteoglycan, betaglycan, and forming a stable complex with and, thereby, sequestering type II activin receptors while excluding type I receptor. The protein is Inhibin beta A chain (INHBA) of Equus caballus (Horse).